Consider the following 391-residue polypeptide: F-box/kelch-repeat protein At3g16740 (391 aa).

Residues 1–47 (MVQISDLPRDLTEEVLSRIPVTSMRAVRFTCKKWNTLSKDRSFTKKH) form the F-box domain. Kelch repeat units follow at residues 104–154 (KIFH…YEEK) and 163–215 (ILRF…LKGN).

As to quaternary structure, part of a SCF (ASK-cullin-F-box) protein ligase complex. Interacts with ASK11.

The protein localises to the nucleus. It functions in the pathway protein modification; protein ubiquitination. In terms of biological role, component of SCF(ASK-cullin-F-box) E3 ubiquitin ligase complexes, which may mediate the ubiquitination and subsequent proteasomal degradation of target proteins. The polypeptide is F-box/kelch-repeat protein At3g16740 (Arabidopsis thaliana (Mouse-ear cress)).